A 559-amino-acid polypeptide reads, in one-letter code: NXPE family member 3 (559 aa).

An N-terminal signal peptide occupies residues 1-30 (MWTNFFKLRLFCCLLAVLMVVVLVVNVTQV). N-linked (GlcNAc...) asparagine glycosylation is found at Asn26, Asn237, and Asn346.

Belongs to the NXPE family.

The protein resides in the secreted. In Pongo abelii (Sumatran orangutan), this protein is NXPE family member 3 (NXPE3).